The following is a 574-amino-acid chain: Potassium-transporting ATPase potassium-binding subunit (574 aa).

Helical transmembrane passes span 7–27, 65–85, 136–156, 175–195, 264–284, 292–312, 390–410, 427–447, 494–514, and 534–554; these read IELG…GTHL, IEYA…SYLI, FGLA…AAAL, LIRI…IILL, FVEM…FGLS, WSIW…CFIF, GLYG…LMIG, MAVL…ALAL, LLLG…ILAI, and GWLF…LNFF.

The protein belongs to the KdpA family. In terms of assembly, the system is composed of three essential subunits: KdpA, KdpB and KdpC.

It is found in the cell inner membrane. Part of the high-affinity ATP-driven potassium transport (or Kdp) system, which catalyzes the hydrolysis of ATP coupled with the electrogenic transport of potassium into the cytoplasm. This subunit binds the periplasmic potassium ions and delivers the ions to the membrane domain of KdpB through an intramembrane tunnel. The sequence is that of Potassium-transporting ATPase potassium-binding subunit from Methylacidiphilum infernorum (isolate V4) (Methylokorus infernorum (strain V4)).